We begin with the raw amino-acid sequence, 565 residues long: MNQTRVLLIFSWLTVATLLWMDWSKNKNETLEISASHNLGVDSNLELEHAVPQIHAGAVPLQKDSQLIAAAPKVPVINVTTDVLQLKLDGFSILAADLLRFPQSKDRGAKPIKLLTDDPNYPYSATTGWVSQSNSPVPNLSTFLPEQPDVSYKLANDQNRLVVPFIWTAANGVSIRRTFTFERGRYAILIRDEIRNSGETPWNAYVFRKLSRVPIPNILNRAMTNPDSFSFNGAVWYSEKGGYERRAFKDYMNDGGLNREIGGGWIALLQHHFFTAWIPQKDQASLYLLAQNGSRDIAELRGPAFTVAPGQTTTTEARLWVGPKLVEQITKEHVKGLDRVVDYSRFQLMALIGQGLFWILSHLNSLLHNWGWAIVGLVVLLRIAMYPLSASQYKSAAKMRKFQPRLQQLKERYGEDRQKFQQAMMELYKKEKINPMGGCFPILIQMPIFFALYWVLVESVELRQAPWLGWIQDLTTRDPYFILPLLNIVIMWATQKLTPTPAGMDPIAGKMMQVMPLIFGVMMAFVPSGLALYWVINGGLNLLIQWWMIRQHADFSRKRSRENIK.

The next 6 membrane-spanning stretches (helical) occupy residues 6–26 (VLLI…WSKN), 348–368 (LMAL…SLLH), 370–390 (WGWA…PLSA), 437–457 (GGCF…WVLV), 479–499 (PYFI…KLTP), and 516–536 (PLIF…YWVI).

It belongs to the OXA1/ALB3/YidC family. Type 1 subfamily. In terms of assembly, interacts with the Sec translocase complex via SecD. Specifically interacts with transmembrane segments of nascent integral membrane proteins during membrane integration.

It is found in the cell inner membrane. In terms of biological role, required for the insertion and/or proper folding and/or complex formation of integral membrane proteins into the membrane. Involved in integration of membrane proteins that insert both dependently and independently of the Sec translocase complex, as well as at least some lipoproteins. Aids folding of multispanning membrane proteins. The protein is Membrane protein insertase YidC of Xylella fastidiosa (strain M23).